The chain runs to 478 residues: MAGDKKFVEDITPMDEDFAQWYTDIVKKAELADYSSIRGCMIIRPNGYAIWENIQKYVDTKLKEYGHENVSMPIFIPENLLQKEKDHVEGFAPEVAWVTHGGDDELAERLCVRPTSETLFCEHYAKIVQSYKDLPKLYNQWCSVVRWEKTTRPFLRTTEFLWQEGHTIHETKEEAESHSLKILNMYSRLCEDMLAMPVVMGKKTDKEKFAGADDTYTIESLMHDGKALQAGTSHYLGQNFSKAFAIQFSDRNGKLDYPHYTTWAVTTRLIGAIIMVHGDNSGLKLPPRIAPTQAVIIPVAQHKEGVLEKAKELKEKLAKVVRVKLDDSDKMPGWKYSEYEMKGIPLRIEIGPKDIEKNQAVLVRRDNREKTIVSLDEIEIKVQEMLDIIHNSMLEEAKKTRDEKTYVATNMEEFEDTIENKPGFIKAMWCGDRACEDKIREVTGATSRCMPFEQEVVSDTCVCCGKKAKNLVYWGRAY.

This sequence belongs to the class-II aminoacyl-tRNA synthetase family. ProS type 3 subfamily. Homodimer.

It is found in the cytoplasm. It catalyses the reaction tRNA(Pro) + L-proline + ATP = L-prolyl-tRNA(Pro) + AMP + diphosphate. Functionally, catalyzes the attachment of proline to tRNA(Pro) in a two-step reaction: proline is first activated by ATP to form Pro-AMP and then transferred to the acceptor end of tRNA(Pro). The sequence is that of Proline--tRNA ligase from Clostridium botulinum (strain Kyoto / Type A2).